Here is a 504-residue protein sequence, read N- to C-terminus: Cobyric acid synthase (504 aa).

A GATase cobBQ-type domain is found at 258–454 (EIEIAIIKLP…LHGIFENDEW (197 aa)). The active-site Nucleophile is C339. H446 is an active-site residue.

This sequence belongs to the CobB/CobQ family. CobQ subfamily.

It participates in cofactor biosynthesis; adenosylcobalamin biosynthesis. Its function is as follows. Catalyzes amidations at positions B, D, E, and G on adenosylcobyrinic A,C-diamide. NH(2) groups are provided by glutamine, and one molecule of ATP is hydrogenolyzed for each amidation. This chain is Cobyric acid synthase, found in Prochlorococcus marinus (strain NATL2A).